The following is a 146-amino-acid chain: Transcriptional regulator MraZ (146 aa).

2 SpoVT-AbrB domains span residues 5–50 (SSFH…TFNE) and 77–120 (ACEC…SREQ).

This sequence belongs to the MraZ family. Forms oligomers.

The protein localises to the cytoplasm. The protein resides in the nucleoid. The protein is Transcriptional regulator MraZ of Desulforapulum autotrophicum (strain ATCC 43914 / DSM 3382 / VKM B-1955 / HRM2) (Desulfobacterium autotrophicum).